Here is an 880-residue protein sequence, read N- to C-terminus: Translation initiation factor IF-2 (880 aa).

Basic and acidic residues-rich tracts occupy residues 34-43 (HMSSLDDKQV), 59-69 (TEKDSKNSSRK), 82-94 (RRRD…DNRH), 110-131 (NRRE…DLLN), 167-181 (KKVE…EKLE), 230-240 (QKEETKPTRKK), and 248-261 (EVPD…EHSD). Residues 34–297 (HMSSLDDKQV…KERPLPETLV (264 aa)) form a disordered region. The segment covering 262-275 (KARRRRNKKNKRIN) has biased composition (basic residues). Basic and acidic residues predominate over residues 276–292 (QSKEVKKQPTQRKERPL). Residues 381-550 (KRPPVVTIMG…LLQADVMELK (170 aa)) form the tr-type G domain. Residues 390–397 (GHVDHGKT) are G1. A GTP-binding site is contributed by 390–397 (GHVDHGKT). Positions 415–419 (GITQR) are G2. Positions 436 to 439 (DTPG) are G3. GTP is bound by residues 436–440 (DTPGH) and 490–493 (NKID). Positions 490–493 (NKID) are G4. The tract at residues 526–528 (SAK) is G5.

It belongs to the TRAFAC class translation factor GTPase superfamily. Classic translation factor GTPase family. IF-2 subfamily.

It is found in the cytoplasm. One of the essential components for the initiation of protein synthesis. Protects formylmethionyl-tRNA from spontaneous hydrolysis and promotes its binding to the 30S ribosomal subunits. Also involved in the hydrolysis of GTP during the formation of the 70S ribosomal complex. In Lactobacillus johnsonii (strain CNCM I-12250 / La1 / NCC 533), this protein is Translation initiation factor IF-2.